Reading from the N-terminus, the 262-residue chain is MASTWFTNIEALSYSVVEFIPYVGTVYSFKRAQLAYQERDWPRHWQSVANFLESAIRDVILFAGVEEVAGVVILHTIAESFTDKLVELYYEHNKDEADRVRQPRIEIPQPQALDPSNELVVVAGRTKGAHGEKVFHGKAKGVHRFHGARFAGTIKHSKYAPSGEYIQLHIPQGLFDGARVTFMWKWTKDEWGTENRPEVIVGTISLYIGDDKLTWFKFTKRQGAGWRPGEGSDFNCKVASLNLIIASTTVGDESLKIDLERI.

In terms of biological role, part of the gene cluster that mediates the biosynthesis of iso-A82775C, a enylepoxycyclohexane and biosynthetic precursor of the chloropestolide anticancer natural products. Within the cluster, the prenyltransferase iacE prenylates siccayne to generate pestalodiol E, using dimethylallyl diphosphate (DMAPP) as cosubstrate. The probable oxidoreductase iacF is then involved in the epoxidation of pestalodiol F to pestalodiol F, which is further converted to pestalofone A by the short-chain dehydrogenase/reductase iacG. Iso-A82775C is subsequently generated from pestalofone A by the short-chain dehydrogenase/reductase iacC. Iso-A82775C is further condensed with maldoxin via a Diels-Alder reaction to produce the anticancer natural products chloropestolides A to E. The sequence is that of Iso-A82775C biosynthesis cluster protein B from Pestalotiopsis fici (strain W106-1 / CGMCC3.15140).